The sequence spans 255 residues: D-aminoacyl-tRNA deacylase (255 aa).

The protein belongs to the DtdA deacylase family. As to quaternary structure, monomer. It depends on Zn(2+) as a cofactor.

The enzyme catalyses a D-aminoacyl-tRNA + H2O = a tRNA + a D-alpha-amino acid + H(+). It catalyses the reaction glycyl-tRNA(Ala) + H2O = tRNA(Ala) + glycine + H(+). Functionally, D-aminoacyl-tRNA deacylase with broad substrate specificity. By recycling D-aminoacyl-tRNA to D-amino acids and free tRNA molecules, this enzyme counteracts the toxicity associated with the formation of D-aminoacyl-tRNA entities in vivo. The polypeptide is D-aminoacyl-tRNA deacylase (Methanocaldococcus jannaschii (strain ATCC 43067 / DSM 2661 / JAL-1 / JCM 10045 / NBRC 100440) (Methanococcus jannaschii)).